Here is a 247-residue protein sequence, read N- to C-terminus: Isoprenyl transferase (247 aa).

Asp-18 is a catalytic residue. A Mg(2+)-binding site is contributed by Asp-18. Substrate-binding positions include 19–22 (GNGR), Trp-23, Arg-31, His-35, and 63–65 (SSE). Catalysis depends on Asn-66, which acts as the Proton acceptor. Substrate contacts are provided by residues Trp-67, Arg-69, Arg-186, and 192-194 (RLS). Residue Glu-205 participates in Mg(2+) binding.

This sequence belongs to the UPP synthase family. As to quaternary structure, homodimer. Mg(2+) serves as cofactor.

Its function is as follows. Catalyzes the condensation of isopentenyl diphosphate (IPP) with allylic pyrophosphates generating different type of terpenoids. The polypeptide is Isoprenyl transferase (Rhizobium meliloti (strain 1021) (Ensifer meliloti)).